Here is a 230-residue protein sequence, read N- to C-terminus: Ribosomal RNA small subunit methyltransferase Nep1 (230 aa).

S-adenosyl-L-methionine contacts are provided by residues Gly-184, Gly-189, and 205 to 210; that span reads IYNKPL.

Belongs to the class IV-like SAM-binding methyltransferase superfamily. RNA methyltransferase NEP1 family. Homodimer.

It catalyses the reaction a pseudouridine in rRNA + S-adenosyl-L-methionine = an N(1)-methylpseudouridine in rRNA + S-adenosyl-L-homocysteine + H(+). In terms of biological role, methyltransferase involved in ribosomal biogenesis. Specifically catalyzes the N1-methylation of the pseudouridine corresponding to position 914 in M.jannaschii 16S rRNA. The polypeptide is Ribosomal RNA small subunit methyltransferase Nep1 (Staphylothermus marinus (strain ATCC 43588 / DSM 3639 / JCM 9404 / F1)).